The sequence spans 491 residues: Blue-light-activated histidine kinase (491 aa).

One can recognise a PAS 1 domain in the interval 19-92 (EANPFTAAVE…EIIHSALEAE (74 aa)). At C69 the chain carries S-4a-FMN cysteine. Positions 93–147 (QSVEIDILNYKKSGEPFWNRLHISPVKTENGELHHFVSSQLDVTLELGKLVELEK) constitute a PAC domain. The PAS 2 domain occupies 159 to 230 (SSDQLQYIVE…QRSQESFATG (72 aa)). Residues 286–368 (EISHRFKNSM…GHRIRTSGPE (83 aa)) are HWE histidine kinase domain. Position 289 is a phosphohistidine; by autocatalysis (H289).

In terms of processing, FMN binds covalently to cysteine after exposure to blue light and this bond is spontaneously broken in the dark.

The enzyme catalyses ATP + protein L-histidine = ADP + protein N-phospho-L-histidine.. In terms of biological role, photosensitive kinase that is involved in increased bacterial virulence upon exposure to light. This Brucella anthropi (strain ATCC 49188 / DSM 6882 / CCUG 24695 / JCM 21032 / LMG 3331 / NBRC 15819 / NCTC 12168 / Alc 37) (Ochrobactrum anthropi) protein is Blue-light-activated histidine kinase.